The following is a 62-amino-acid chain: MRCLPVFVILLLLIASAPSVDARPKTKDDIPLVSFQDHAKRILQTFESRYDCCKTFECCHWG.

An N-terminal signal peptide occupies residues 1-22 (MRCLPVFVILLLLIASAPSVDA). Positions 23 to 48 (RPKTKDDIPLVSFQDHAKRILQTFES) are excised as a propeptide. Trp-61 bears the Tryptophan amide mark.

The protein belongs to the conotoxin T superfamily. Post-translationally, contains 2 disulfide bonds that can be either 'C1-C3, C2-C4' or 'C1-C4, C2-C3', since these disulfide connectivities have been observed for conotoxins with cysteine framework V (for examples, see AC P0DQQ7 and AC P81755). As to expression, expressed by the venom duct.

It is found in the secreted. This is Conotoxin Pn-014 from Conus pennaceus (Feathered cone).